A 706-amino-acid polypeptide reads, in one-letter code: Elongation factor G 1 (706 aa).

The tr-type G domain maps to 8–290; that stretch reads NRYRNIGICA…AVIDYLPAPT (283 aa). GTP is bound by residues 17-24, 88-92, and 142-145; these read AHVDAGKT, DTPGH, and NKMD.

The protein belongs to the TRAFAC class translation factor GTPase superfamily. Classic translation factor GTPase family. EF-G/EF-2 subfamily.

Its subcellular location is the cytoplasm. Functionally, catalyzes the GTP-dependent ribosomal translocation step during translation elongation. During this step, the ribosome changes from the pre-translocational (PRE) to the post-translocational (POST) state as the newly formed A-site-bound peptidyl-tRNA and P-site-bound deacylated tRNA move to the P and E sites, respectively. Catalyzes the coordinated movement of the two tRNA molecules, the mRNA and conformational changes in the ribosome. This is Elongation factor G 1 from Pseudomonas aeruginosa (strain ATCC 15692 / DSM 22644 / CIP 104116 / JCM 14847 / LMG 12228 / 1C / PRS 101 / PAO1).